The chain runs to 955 residues: Eukaryotic translation initiation factor 3 subunit C (955 aa).

2 disordered regions span residues methionine 1 to valine 22 and arginine 157 to tryptophan 299. Positions aspartate 162–glutamate 183 are enriched in acidic residues. The span at valine 206–glycine 218 shows a compositional bias: low complexity. Residues serine 219–aspartate 229 are compositionally biased toward acidic residues. Residues glutamate 230–glutamate 250 show a composition bias toward basic and acidic residues. Positions methionine 288 to glutamate 297 are enriched in acidic residues. Residues phenylalanine 658–proline 834 enclose the PCI domain. Residues asparagine 865–glutamate 955 are disordered. Residues tyrosine 882–asparagine 894 are compositionally biased toward low complexity. A compositionally biased stretch (basic and acidic residues) spans glycine 911–glutamate 955.

This sequence belongs to the eIF-3 subunit C family. As to quaternary structure, component of the eukaryotic translation initiation factor 3 (eIF-3) complex.

The protein localises to the cytoplasm. Its function is as follows. Component of the eukaryotic translation initiation factor 3 (eIF-3) complex, which is involved in protein synthesis of a specialized repertoire of mRNAs and, together with other initiation factors, stimulates binding of mRNA and methionyl-tRNAi to the 40S ribosome. The eIF-3 complex specifically targets and initiates translation of a subset of mRNAs involved in cell proliferation. This is Eukaryotic translation initiation factor 3 subunit C from Anopheles gambiae (African malaria mosquito).